We begin with the raw amino-acid sequence, 404 residues long: Formate-dependent phosphoribosylglycinamide formyltransferase (404 aa).

Residues 25–26 (EL) and Glu85 each bind N(1)-(5-phospho-beta-D-ribosyl)glycinamide. Residues Arg118, Lys159, 164–169 (SSGKGQ), 199–202 (EGFV), and Glu207 contribute to the ATP site. Residues 123 to 318 (RLAAEELGLP…EFELHARAIL (196 aa)) form the ATP-grasp domain. Residues Glu277 and Glu289 each coordinate Mg(2+). N(1)-(5-phospho-beta-D-ribosyl)glycinamide-binding positions include Asp296, Lys365, and 372–373 (RR).

The protein belongs to the PurK/PurT family. Homodimer.

It carries out the reaction N(1)-(5-phospho-beta-D-ribosyl)glycinamide + formate + ATP = N(2)-formyl-N(1)-(5-phospho-beta-D-ribosyl)glycinamide + ADP + phosphate + H(+). The protein operates within purine metabolism; IMP biosynthesis via de novo pathway; N(2)-formyl-N(1)-(5-phospho-D-ribosyl)glycinamide from N(1)-(5-phospho-D-ribosyl)glycinamide (formate route): step 1/1. Its function is as follows. Involved in the de novo purine biosynthesis. Catalyzes the transfer of formate to 5-phospho-ribosyl-glycinamide (GAR), producing 5-phospho-ribosyl-N-formylglycinamide (FGAR). Formate is provided by PurU via hydrolysis of 10-formyl-tetrahydrofolate. The protein is Formate-dependent phosphoribosylglycinamide formyltransferase of Burkholderia thailandensis (strain ATCC 700388 / DSM 13276 / CCUG 48851 / CIP 106301 / E264).